The chain runs to 927 residues: Probable UDP-N-acetylglucosamine--peptide N-acetylglucosaminyltransferase SPINDLY (927 aa).

The segment at 1–31 (MGRPGMDSSEGRESNGVVPERNGGAVPAKQQ) is disordered. 11 TPR repeats span residues 34–67 (GKDTLRYANILRSRNKFAEALQLYNNVLEKDEAN), 68–101 (VEALIGKGICLQAQSLPMQAIECFNEAVRIDPGN), 102–135 (ACALTYCGMIYKDEGHLVEAAEAYQKARNADPSY), 143–176 (AIVLTDLGTSLKLAGNTEEGIQKYCEALEVDSHY), 177–210 (APAYYNLGVVYSEMMQFDLALTCYEKAALERPLY), 211–244 (AEAYCNMGVIYKNRGELEAAIACYERCLTISPNF), 252–285 (AIALTDLGTKVKIEGDINQGVAYYKKALFYNWHY), 286–319 (ADAMYNLGVAYGEMLNFEMAIVFYELALHFNPRC), 320–353 (AEACNNLGVIYKDRDNLDKAVECYQMALSIKPNF), 355–387 (QSLNNLGVVYTVQGKMDAASSMIQKAIFANSTY), and 388–421 (AEAYNNLGVLYRDAGSITSAVQAYEKCLQIDPDS). The interval 422 to 927 (RNAGQNRLLA…KVEANGHISR (506 aa)) is catalytic region.

This sequence belongs to the glycosyltransferase 41 family. O-GlcNAc transferase subfamily.

The protein resides in the nucleus. It carries out the reaction L-seryl-[protein] + UDP-N-acetyl-alpha-D-glucosamine = 3-O-(N-acetyl-beta-D-glucosaminyl)-L-seryl-[protein] + UDP + H(+). The catalysed reaction is L-threonyl-[protein] + UDP-N-acetyl-alpha-D-glucosamine = 3-O-(N-acetyl-beta-D-glucosaminyl)-L-threonyl-[protein] + UDP + H(+). It participates in protein modification; protein glycosylation. Probable O-linked N-acetylglucosamine transferase (OGT) involved in various processes such as gibberellin (GA) signaling pathway. OGTs catalyze the addition of nucleotide-activated sugars directly onto the polypeptide through O-glycosidic linkage with the hydroxyl of serine or threonine. Probably acts by adding O-linked sugars to yet unknown proteins. The protein is Probable UDP-N-acetylglucosamine--peptide N-acetylglucosaminyltransferase SPINDLY (SPY) of Oryza sativa subsp. japonica (Rice).